A 202-amino-acid polypeptide reads, in one-letter code: Riboflavin synthase (202 aa).

Lumazine-binding repeat units follow at residues 1 to 101 and 102 to 198; these read MFTG…MGGH and LVFG…ARLA. 2,4-dihydroxypteridine contacts are provided by residues 4-6, 47-49, 66-68, 105-107, lysine 140, 149-151, and 163-168; these read GII, CLT, EAW, GHV, SLT, and LLIRHS.

As to quaternary structure, homotrimer.

It carries out the reaction 2 6,7-dimethyl-8-(1-D-ribityl)lumazine + H(+) = 5-amino-6-(D-ribitylamino)uracil + riboflavin. It participates in cofactor biosynthesis; riboflavin biosynthesis; riboflavin from 2-hydroxy-3-oxobutyl phosphate and 5-amino-6-(D-ribitylamino)uracil: step 2/2. Is inhibited by riboflavin. Product inhibition may be the major mechanism by which RS regulates its enzymatic activity in vivo. Functionally, catalyzes the dismutation of two molecules of 6,7-dimethyl-8-ribityllumazine, resulting in the formation of riboflavin and 5-amino-6-(D-ribitylamino)uracil. This is Riboflavin synthase from Brucella abortus (strain 2308).